Here is a 92-residue protein sequence, read N- to C-terminus: MSDRLTDDEIQAQLPAAWDRDGDEIVRTFEFESYLEGVGFASAAGGLAEEAFHHPEMTIGWREVEVRLTTHDAGGITQKDIDLAERFDELAE.

Belongs to the pterin-4-alpha-carbinolamine dehydratase family.

It carries out the reaction (4aS,6R)-4a-hydroxy-L-erythro-5,6,7,8-tetrahydrobiopterin = (6R)-L-erythro-6,7-dihydrobiopterin + H2O. This Natronomonas pharaonis (strain ATCC 35678 / DSM 2160 / CIP 103997 / JCM 8858 / NBRC 14720 / NCIMB 2260 / Gabara) (Halobacterium pharaonis) protein is Putative pterin-4-alpha-carbinolamine dehydratase.